The following is a 691-amino-acid chain: Elongation factor G (691 aa).

Residues 10-284 (KRLRNIGIAA…AVVDYLPSPL (275 aa)) enclose the tr-type G domain. Residues 19 to 26 (AHIDAGKT), 83 to 87 (DTPGH), and 137 to 140 (NKMD) contribute to the GTP site.

It belongs to the TRAFAC class translation factor GTPase superfamily. Classic translation factor GTPase family. EF-G/EF-2 subfamily.

The protein localises to the cytoplasm. Functionally, catalyzes the GTP-dependent ribosomal translocation step during translation elongation. During this step, the ribosome changes from the pre-translocational (PRE) to the post-translocational (POST) state as the newly formed A-site-bound peptidyl-tRNA and P-site-bound deacylated tRNA move to the P and E sites, respectively. Catalyzes the coordinated movement of the two tRNA molecules, the mRNA and conformational changes in the ribosome. This chain is Elongation factor G (fusA), found in Thermus thermophilus (strain ATCC 27634 / DSM 579 / HB8).